The primary structure comprises 429 residues: Transcriptional adapter 3 (429 aa).

The stretch at 41-70 (IEELDTLQLELETLLSSASRRLRALEEQRQ) forms a coiled coil. Disordered regions lie at residues 86–132 (KLEK…TKVQ), 208–257 (EERR…PFGP), and 274–308 (PMED…HTRS). 2 stretches are compositionally biased toward basic and acidic residues: residues 208–221 (EERR…DKKK) and 230–249 (LDAK…HEPP). Residues 364 to 404 (LLKLAREEMRKQELRQRVRVADNEVMEAFRRIMAARQKKRT) are a coiled coil.

The protein belongs to the NGG1 family.

The protein resides in the nucleus. In terms of biological role, functions as a component of the PCAF complex. The PCAF complex is capable of efficiently acetylating histones in a nucleosomal context. This chain is Transcriptional adapter 3 (tada3), found in Danio rerio (Zebrafish).